Consider the following 61-residue polypeptide: Myrmicitoxin(1)-Pm5a (61 aa).

The N-terminal stretch at 1–23 (MKAIIFLFAVLTVVAIIIPIISG) is a signal peptide. A propeptide spanning residues 24 to 33 (EPNAGPLAAS) is cleaved from the precursor. The residue at position 60 (Gln-60) is a Glutamine amide.

It belongs to the formicidae venom clade 2 family. In terms of tissue distribution, expressed by the venom gland.

The protein localises to the secreted. Its function is as follows. Toxin that causes a rapid and irreversible paralysis when intrathoracically injected into insects (blowflies). Does not cause spontaneous nocifensive behaviors by intraplantar injection in mice. The sequence is that of Myrmicitoxin(1)-Pm5a from Pogonomyrmex maricopa (Maricopa harvester ant).